The sequence spans 113 residues: Hydrogenase maturation factor HypA (113 aa).

Ni(2+) is bound at residue His2. Zn(2+) contacts are provided by Cys73, Cys76, Cys89, and Cys92.

The protein belongs to the HypA/HybF family.

Involved in the maturation of [NiFe] hydrogenases. Required for nickel insertion into the metal center of the hydrogenase. In Rhizobium leguminosarum bv. viciae, this protein is Hydrogenase maturation factor HypA.